A 1022-amino-acid polypeptide reads, in one-letter code: Mismatch repair endonuclease pms1 (1022 aa).

Disordered regions lie at residues 251–282, 390–527, and 622–676; these read TGQS…SQSS, FNDE…EDED, and KMKQ…IDGY. Positions 403-412 are enriched in polar residues; it reads KQSKISSFPN. 2 stretches are compositionally biased toward low complexity: residues 436-469 and 647-664; these read TTTT…NNRN and QKQQ…QQQQ.

The protein belongs to the DNA mismatch repair MutL/HexB family. As to quaternary structure, heterodimer of pms1 and mlh1 (MutL alpha). Forms a ternary complex with MutS alpha (msh2-msh6) or MutS beta (msh2-msh3).

The protein resides in the nucleus. Component of the post-replicative DNA mismatch repair system (MMR). Heterodimerizes with mlh1 to form MutL alpha. DNA repair is initiated by MutS alpha (msh2-msh6) or MutS beta (msh2-msh3) binding to a dsDNA mismatch, then MutL alpha is recruited to the heteroduplex. Assembly of the MutL-MutS-heteroduplex ternary complex in presence of rfc and pcna is sufficient to activate endonuclease activity of pms1. It introduces single-strand breaks near the mismatch and thus generates new entry points for the exonuclease exo1 to degrade the strand containing the mismatch. In Dictyostelium discoideum (Social amoeba), this protein is Mismatch repair endonuclease pms1 (pms1).